The chain runs to 181 residues: FMN reductase (NADH) RutF (181 aa).

The protein belongs to the non-flavoprotein flavin reductase family. RutF subfamily.

It catalyses the reaction FMNH2 + NAD(+) = FMN + NADH + 2 H(+). Catalyzes the reduction of FMN to FMNH2 which is used to reduce pyrimidine by RutA via the Rut pathway. The protein is FMN reductase (NADH) RutF of Ancylobacter novellus (strain ATCC 8093 / DSM 506 / JCM 20403 / CCM 1077 / IAM 12100 / NBRC 12443 / NCIMB 10456) (Starkeya novella).